Here is a 144-residue protein sequence, read N- to C-terminus: uncharacterized protein (144 aa).

A run of 2 helical transmembrane segments spans residues 10 to 30 (ILTR…GLGP) and 60 to 80 (YVFL…AIAV).

Its subcellular location is the membrane. This is an uncharacterized protein from Saccharomyces cerevisiae (strain ATCC 204508 / S288c) (Baker's yeast).